The chain runs to 477 residues: Exodeoxyribonuclease 7 large subunit (477 aa).

Positions 456–477 (GGTVAPRKAPPKKPGGGQGSLL) are disordered.

It belongs to the XseA family. In terms of assembly, heterooligomer composed of large and small subunits.

It localises to the cytoplasm. It catalyses the reaction Exonucleolytic cleavage in either 5'- to 3'- or 3'- to 5'-direction to yield nucleoside 5'-phosphates.. Its function is as follows. Bidirectionally degrades single-stranded DNA into large acid-insoluble oligonucleotides, which are then degraded further into small acid-soluble oligonucleotides. This chain is Exodeoxyribonuclease 7 large subunit, found in Parvibaculum lavamentivorans (strain DS-1 / DSM 13023 / NCIMB 13966).